A 458-amino-acid polypeptide reads, in one-letter code: Plant UBX domain-containing protein 2 (458 aa).

The disordered stretch occupies residues Met-1–Gly-103. Residues Pro-44–Ala-54 show a composition bias toward polar residues. Residues Asn-56–Glu-70 are compositionally biased toward pro residues. The span at Ser-74–Arg-85 shows a compositional bias: polar residues. The C2H2-type; atypical zinc-finger motif lies at Phe-121–Cys-143. In terms of domain architecture, PUB spans Ser-181–Ser-248. A UBX domain is found at Lys-349–Phe-433.

Interacts with CDC48A in vitro and co-fractionates with membrane-associated but not soluble CDC48A in vivo.

It is found in the membrane. In terms of biological role, facilitates the interaction of SYP31 and CDC48A, thereby regulating an CDC48A membrane-associated function. Appears to act as a negative regulator mediating the powdery mildew-plant interaction. This Arabidopsis thaliana (Mouse-ear cress) protein is Plant UBX domain-containing protein 2.